Reading from the N-terminus, the 394-residue chain is MSKEKFERTKPHVNVGTIGHVDHGKTTLTAAICTTLAKVYGGEAKDFASIDNAPEERERGITIATSHVEYDTPSRHYAHVDCPGHADYVKNMITGAAQMDGGILVVAATDGPMPQTREHILLGRQVGIPYIIVFMNKCDMVDDEELLELVEMEVRELLSEYDFPGDDLPVIQGSALGALNGEEQWEAKIVELAEALDTYIPEPERAVDQPFLMPIEDVFSIQGRGTVVTGRIERGILTVGDEVAIVGIKDTTTTTCTGVEMFRKLLDEGRAGENVGALLRGTKRDEVERGQVLAKPGSITPHTKFESEVYVLSKEEGGRHTPFFKGYRPQFYFRTTDVTGDISLPEGVEMVMPGDNIQMVVELIAPIAMDEGLRFAIREGGRTVGAGVVAKIFE.

Residues 10–204 (KPHVNVGTIG…ALDTYIPEPE (195 aa)) form the tr-type G domain. Positions 19–26 (GHVDHGKT) are G1. 19-26 (GHVDHGKT) is a binding site for GTP. Residue threonine 26 participates in Mg(2+) binding. The tract at residues 60 to 64 (GITIA) is G2. A G3 region spans residues 81–84 (DCPG). Residues 81–85 (DCPGH) and 136–139 (NKCD) each bind GTP. The segment at 136–139 (NKCD) is G4. Residues 174 to 176 (SAL) form a G5 region.

This sequence belongs to the TRAFAC class translation factor GTPase superfamily. Classic translation factor GTPase family. EF-Tu/EF-1A subfamily. As to quaternary structure, monomer.

Its subcellular location is the cytoplasm. It carries out the reaction GTP + H2O = GDP + phosphate + H(+). GTP hydrolase that promotes the GTP-dependent binding of aminoacyl-tRNA to the A-site of ribosomes during protein biosynthesis. This Vibrio parahaemolyticus serotype O3:K6 (strain RIMD 2210633) protein is Elongation factor Tu.